A 442-amino-acid polypeptide reads, in one-letter code: MTLQLPNDPARSDVLSARPTLWINSLYRDDAIGDTCLPLVPDQVDVAQSDWERLAPLLETCFPELKKTAGAIRSDLTELHALREALGYGGGEFGRVFAKADSALPVAGSIKARGGVYEVFVFAEELARREGLIGDREDIRHLASAEARAFFSSYSIAVGSTGNLGLSVGVAARALGFEATVHMSSDAKPWKVERLRKLGVKVVQHEADYTTAVENARSAAEDDPAVYFVDDEQSRRLFLGYSVAASELVDQLQTFGVAVDADRPLFLYLPCGIGGAPGGVTYGAKKVFGDNAHCFFVEPVQSPCALVHMMSGSEELVSVYDVGLTNSTEADGMAVARMSAFVATVMRNMLAGVFTVDDASLFRWLLLAHEVQGLRLEPSAAAGFAGPGFIVKHPQGRAFCERLKLSDRLRQATHVVWTTGGSFVPQEQFDQFLEIAQASRSR.

N6-(pyridoxal phosphate)lysine is present on Lys111.

The protein belongs to the serine/threonine dehydratase family. DsdA subfamily. Pyridoxal 5'-phosphate serves as cofactor.

The catalysed reaction is D-serine = pyruvate + NH4(+). The polypeptide is Probable D-serine dehydratase (Sinorhizobium medicae (strain WSM419) (Ensifer medicae)).